The following is a 137-amino-acid chain: Large ribosomal subunit protein uL16 (137 aa).

This sequence belongs to the universal ribosomal protein uL16 family. In terms of assembly, part of the 50S ribosomal subunit.

Binds 23S rRNA and is also seen to make contacts with the A and possibly P site tRNAs. The sequence is that of Large ribosomal subunit protein uL16 from Beijerinckia indica subsp. indica (strain ATCC 9039 / DSM 1715 / NCIMB 8712).